The sequence spans 573 residues: Mitochondrial distribution and morphology protein 34 (573 aa).

The region spanning 1 to 195 is the SMP-LTD domain; that stretch reads MAFNFNWSPL…LPAIIHRLSL (195 aa). 4 disordered regions span residues 301–326, 349–433, 499–521, and 550–573; these read EGLGSGLMSPGSPALSRTHSHISSPL, FSGY…RFPN, SREKSMEAQSSHGPNPGLSITDA, and LVNNNYPGPWEQTRARTPPPAYGQ. The segment covering 306–316 has biased composition (low complexity); the sequence is GLMSPGSPALS. Residues 360-373 show a composition bias toward basic residues; it reads RHTKARPTKKRKKR. Basic and acidic residues predominate over residues 374–385; that stretch reads VVDLRKQSKPTD. Residues 396 to 409 show a composition bias toward low complexity; that stretch reads TETSTASTTFSSST.

Belongs to the MDM34 family. Component of the ER-mitochondria encounter structure (ERMES) or MDM complex, composed of MMM1, MDM10, MDM12 and MDM34.

The protein localises to the mitochondrion outer membrane. Its function is as follows. Component of the ERMES/MDM complex, which serves as a molecular tether to connect the endoplasmic reticulum (ER) and mitochondria. Components of this complex are involved in the control of mitochondrial shape and protein biogenesis, and function in nonvesicular lipid trafficking between the ER and mitochondria. MDM34 is required for the interaction of the ER-resident membrane protein MMM1 and the outer mitochondrial membrane-resident beta-barrel protein MDM10. The protein is Mitochondrial distribution and morphology protein 34 of Uncinocarpus reesii (strain UAMH 1704).